Consider the following 218-residue polypeptide: Uracil-DNA glycosylase (218 aa).

Residue aspartate 59 is the Proton acceptor of the active site.

It belongs to the uracil-DNA glycosylase (UDG) superfamily. UNG family.

The protein resides in the cytoplasm. The enzyme catalyses Hydrolyzes single-stranded DNA or mismatched double-stranded DNA and polynucleotides, releasing free uracil.. Excises uracil residues from the DNA which can arise as a result of misincorporation of dUMP residues by DNA polymerase or due to deamination of cytosine. The protein is Uracil-DNA glycosylase of Staphylococcus aureus (strain JH1).